The chain runs to 315 residues: Ribonuclease Z (315 aa).

The Zn(2+) site is built by histidine 61, histidine 63, aspartate 65, histidine 66, histidine 151, aspartate 219, and histidine 278. Catalysis depends on aspartate 65, which acts as the Proton acceptor.

The protein belongs to the RNase Z family. In terms of assembly, homodimer. Zn(2+) is required as a cofactor.

It catalyses the reaction Endonucleolytic cleavage of RNA, removing extra 3' nucleotides from tRNA precursor, generating 3' termini of tRNAs. A 3'-hydroxy group is left at the tRNA terminus and a 5'-phosphoryl group is left at the trailer molecule.. Functionally, zinc phosphodiesterase, which displays some tRNA 3'-processing endonuclease activity. Probably involved in tRNA maturation, by removing a 3'-trailer from precursor tRNA. The sequence is that of Ribonuclease Z from Clostridium botulinum (strain Eklund 17B / Type B).